The primary structure comprises 264 residues: Glyceraldehyde-3-phosphate dehydrogenase (264 aa).

NAD(+)-binding residues include Arg-45 and Thr-93. Residues 123-125 and Thr-154 contribute to the D-glyceraldehyde 3-phosphate site; that span reads SCT. Catalysis depends on Cys-124, which acts as the Nucleophile. Residue Asn-155 coordinates NAD(+). D-glyceraldehyde 3-phosphate is bound by residues Arg-169, 182–183, and Arg-205; that span reads TG. The segment at 245 to 264 is disordered; it reads GILGYTEDPXVSSDXKGNSH.

The protein belongs to the glyceraldehyde-3-phosphate dehydrogenase family. Homotetramer.

Its subcellular location is the cytoplasm. The catalysed reaction is D-glyceraldehyde 3-phosphate + phosphate + NAD(+) = (2R)-3-phospho-glyceroyl phosphate + NADH + H(+). It participates in carbohydrate degradation; glycolysis; pyruvate from D-glyceraldehyde 3-phosphate: step 1/5. Its function is as follows. Catalyzes the oxidative phosphorylation of glyceraldehyde 3-phosphate (G3P) to 1,3-bisphosphoglycerate (BPG) using the cofactor NAD. The first reaction step involves the formation of a hemiacetal intermediate between G3P and a cysteine residue, and this hemiacetal intermediate is then oxidized to a thioester, with concomitant reduction of NAD to NADH. The reduced NADH is then exchanged with the second NAD, and the thioester is attacked by a nucleophilic inorganic phosphate to produce BPG. The polypeptide is Glyceraldehyde-3-phosphate dehydrogenase (gap) (Borrelia hermsii).